Here is a 576-residue protein sequence, read N- to C-terminus: Alpha-1,3-arabinosyltransferase XAT3 (576 aa).

Over 1–19 (MKAGERPKLVRGVRQESRR) the chain is Cytoplasmic. Residues 20–40 (FRLLVIVVGFFLVSLTFVFVS) form a helical; Signal-anchor for type II membrane protein membrane-spanning segment. Over 41-576 (KPDAILFSLN…LLEALDNLNP (536 aa)) the chain is Lumenal. A disordered region spans residues 64 to 171 (IQQKVNEPSG…KHKVTLPTVS (108 aa)). Composition is skewed to basic and acidic residues over residues 73–98 (GESR…DAKP), 126–138 (THNK…KSHQ), and 147–163 (GESK…EQKH). Residues N172, N375, and N443 are each glycosylated (N-linked (GlcNAc...) asparagine).

Belongs to the glycosyltransferase 61 family.

The protein resides in the golgi apparatus membrane. It participates in glycan metabolism. Glycosyltransferase involved in the arabinosylation of xylan, the major hemicellulose (non-cellulosic component) of primary and secondary walls of angiosperms. Possesses alpha-1,3-arabinosyltransferase activity, transferring an arabinofuranose residue to the xylan backbone. This chain is Alpha-1,3-arabinosyltransferase XAT3, found in Oryza sativa subsp. japonica (Rice).